The primary structure comprises 317 residues: 2-oxoglutarate and iron-dependent oxygenase domain-containing protein 3 (317 aa).

The interval 1–34 is disordered; that stretch reads MATRHRRRGGSAPSWAKPGKPGERPGGPKKSRGR. Topologically, residues 1–39 are cytoplasmic; that stretch reads MATRHRRRGGSAPSWAKPGKPGERPGGPKKSRGRTSWKS. Residues 40–60 traverse the membrane as a helical; Signal-anchor for type II membrane protein segment; the sequence is LLIWGVFGVTLGLMAGYYLWG. Residues 61–317 are Lumenal-facing; that stretch reads ELITDDSVTE…EHAIGDPTWT (257 aa). 2 N-linked (GlcNAc...) asparagine glycosylation sites follow: Asn195 and Asn213. The 103-residue stretch at 205–307 folds into the Fe2OG dioxygenase domain; it reads KPTFFSRMNS…AITISFTCNP (103 aa). Residues His228 and Asp230 each coordinate Fe cation. Asn265 carries N-linked (GlcNAc...) asparagine glycosylation. His286 lines the Fe cation pocket. Arg296 is an active-site residue. Arg296 serves as a coordination point for 2-oxoglutarate.

It belongs to the OGFOD3 family. Fe(2+) serves as cofactor. The cofactor is L-ascorbate.

It localises to the membrane. This chain is 2-oxoglutarate and iron-dependent oxygenase domain-containing protein 3 (ogfod3), found in Xenopus tropicalis (Western clawed frog).